The sequence spans 648 residues: MANLLGYVGRRSAPYVVRRFIGANNYRYYSASQNLKSNLSEPVGEDPIEPTEQASKGNINEVQDGLSKAEMNAEESVPWYLRDDSSSPLLENKNVELPFVPDHAPSSVNTFLELLSNEYGLEDIELFDLTQLDPENEYHADNQPTDYMIICTGKSEKHIYKASNELRTYIKHNYNLIPKIEGMASNSKTPAARRRMLRRARKGPLATDNDYGRTPNSWVMCDTAVNNTCIHILTDSRRDELNLETLWCREEDIEKYSTPESATEESDDIFIGIRRFHTMTPFARRFQQMRSYSASQSNESLESYLHKLTGESLTVDSLRQHIKGFESDFQQPTIKDYNTRFNFYRSIHIQNSDVMSLEKLTSILLDKYSSLQIILSNSIDLSKERTQDMVDFMKLLIDSPEIKKHFDLSNSKQMNSYSDELYDKLAQFVSSLFQFSKEQIDMSRHPEFLPLLWRLSFVQKNDTVIGSRMIDDIIYQEGDLPDLPGQPSIFQAKNRARDTLDLINYYNQKIDENASTTNSFKELLLFTYGNAGDWAKFWNTWEISFNLLNNSKIDSKSSIKNWVRLVVYLAIRNDRSAIVHFLNNYWNHSTSIAGSFIDDFELNNNVFNSDEEKRSFKNSVYKMLNSMNNDNESNPSFSNVKEFVDNLD.

The transit peptide at 1–29 directs the protein to the mitochondrion; the sequence is MANLLGYVGRRSAPYVVRRFIGANNYRYY.

Belongs to the ATP25 family.

The protein localises to the mitochondrion inner membrane. Probable mitochondrial mRNA stabilization factor. This Debaryomyces hansenii (strain ATCC 36239 / CBS 767 / BCRC 21394 / JCM 1990 / NBRC 0083 / IGC 2968) (Yeast) protein is ATPase synthesis protein 25, mitochondrial (ATP25).